The following is a 415-amino-acid chain: Histidine--tRNA ligase (415 aa).

It belongs to the class-II aminoacyl-tRNA synthetase family. In terms of assembly, homodimer.

The protein localises to the cytoplasm. It catalyses the reaction tRNA(His) + L-histidine + ATP = L-histidyl-tRNA(His) + AMP + diphosphate + H(+). The sequence is that of Histidine--tRNA ligase from Rickettsia bellii (strain RML369-C).